Here is a 270-residue protein sequence, read N- to C-terminus: Acyl-[acyl-carrier-protein]--UDP-N-acetylglucosamine O-acyltransferase (270 aa).

It belongs to the transferase hexapeptide repeat family. LpxA subfamily. As to quaternary structure, homotrimer.

The protein localises to the cytoplasm. The enzyme catalyses a (3R)-hydroxyacyl-[ACP] + UDP-N-acetyl-alpha-D-glucosamine = a UDP-3-O-[(3R)-3-hydroxyacyl]-N-acetyl-alpha-D-glucosamine + holo-[ACP]. The protein operates within glycolipid biosynthesis; lipid IV(A) biosynthesis; lipid IV(A) from (3R)-3-hydroxytetradecanoyl-[acyl-carrier-protein] and UDP-N-acetyl-alpha-D-glucosamine: step 1/6. In terms of biological role, involved in the biosynthesis of lipid A, a phosphorylated glycolipid that anchors the lipopolysaccharide to the outer membrane of the cell. The chain is Acyl-[acyl-carrier-protein]--UDP-N-acetylglucosamine O-acyltransferase from Helicobacter pylori (strain HPAG1).